Here is a 134-residue protein sequence, read N- to C-terminus: Small ribosomal subunit protein uS9 (134 aa).

The interval 114-134 (QKESKNFGGPGARAKYQKSYR) is disordered.

It belongs to the universal ribosomal protein uS9 family.

The sequence is that of Small ribosomal subunit protein uS9 from Methanosarcina acetivorans (strain ATCC 35395 / DSM 2834 / JCM 12185 / C2A).